A 1269-amino-acid chain; its full sequence is MTPTTNNKRINFASIKNPLFYPDFLEVQLKSFHDFLQLDTPPERRKKEGLYKVFAENFPITDTRNNFVLEFLDYYIDPPKYSIEECLSRGLTYSVPLKAKLKLYCTDPDHEDFATVIQDVFLGPIPYMTSSGTFVINGAERVIVSQLHRSPGVFFGQSLHTNGTKLYSARIIPFKGSWIEFATDINNVMYAYIDRKKKLPVTTLLRAIGFEADKDILDIFNLAEEVKVTKANLKKCIGRKLAARVINTYIDDLSDEDTGEVVSMERITVVVDREVELTEDNIEAILNSNTQTILLHRNDSNTSDYSIIFNTLQKDPCNSEKEALYYVYRQLRNAEPADDASAREVITNLFFSDKRYDLGDVGRYRINKKLNLNIDPDIKVLTNEDIIEIIKYLIELVNSKASVDDIDHLSNRRVRTVGEQLYNQFGIGLARMARTVRDRMNVRDNEVFTPIDLVNAKTISSVVNSFFGTNALSQFMDQTNPLAEITHKRRLSALGPGGLSRERAGFEVRDVHYTHYGRLCPIETPEGPNIGLISSLCVYAKISDLGFITTPYREVKNGKVDFSDNGLKYYTAEEEEEKTVAQGNAPLDENGRFVRERVKARYESDFPLVTPDEVDLMDVSPTQIASIAAALIPFLEHDDANRALMGSNMMRQAVPLLRPESPIVGTGIEGKLVKDSRTQIVAERGGEVVFVDASCIKIRYDRTADEEFVSFDDAIVTYYLPKYRKTNQSTTIDLHPICSKGDRVEAGQILTEGYSTQGGELALGRNVQVAYMPWKGYNYEDAIVLNERMVREDFFTSVHVDEYILEVRETKRGLEELTSDIPNVSEDATRDLDENGIVRIGAHIEPGDILIGKITPKGESDPTPEEKLLRAIFGDKAGDVKDASLKATPSLRGVVIDTKLFSKAAKKKSRTSTKETVSKLDETYAKRQQQLHERLIEKLTELTKGKTCCGVKDYLNVELIKAGSKLTKKDLEALDFNVIQLSDWTNDAHTNELIKAVAVNYLKHSKEIEAELRRRKLDETIGDELPAGIVQMAKVYIAKKRKIQVGDKMAGRHGNKGIVSKIVRQEDMPFLADGTPVDICLNPLGVPSRMNLGQIFEAVLAWAGRKMNVKFATPIFDGASLNDMNEWTDKAGLPRDGKTYLYDGGTGERFDQPATVGVTYFLKLGHMVDDKMHARSIGPYSLITQQPLGGKAQFGGQRFGEMEVWALEAFGASHILQEILTVKSDDVVGRSKAYEAIVKGDPMPTPGIPESLNVLLHELKGLGLSFSLD.

This sequence belongs to the RNA polymerase beta chain family. As to quaternary structure, the RNAP catalytic core consists of 2 alpha, 1 beta, 1 beta' and 1 omega subunit. When a sigma factor is associated with the core the holoenzyme is formed, which can initiate transcription.

It catalyses the reaction RNA(n) + a ribonucleoside 5'-triphosphate = RNA(n+1) + diphosphate. DNA-dependent RNA polymerase catalyzes the transcription of DNA into RNA using the four ribonucleoside triphosphates as substrates. This chain is DNA-directed RNA polymerase subunit beta, found in Porphyromonas gingivalis (strain ATCC 33277 / DSM 20709 / CIP 103683 / JCM 12257 / NCTC 11834 / 2561).